The sequence spans 345 residues: Probable dual-specificity RNA methyltransferase RlmN (345 aa).

Residue E90 is the Proton acceptor of the active site. Residues 96-327 (QSYGNSVCVT…CIVRREFGHD (232 aa)) form the Radical SAM core domain. C103 and C332 are disulfide-bonded. [4Fe-4S] cluster contacts are provided by C110, C114, and C117. S-adenosyl-L-methionine contacts are provided by residues 160–161 (GE), S192, 215–217 (SLH), and N291. The S-methylcysteine intermediate role is filled by C332.

It belongs to the radical SAM superfamily. RlmN family. [4Fe-4S] cluster serves as cofactor.

The protein localises to the cytoplasm. It carries out the reaction adenosine(2503) in 23S rRNA + 2 reduced [2Fe-2S]-[ferredoxin] + 2 S-adenosyl-L-methionine = 2-methyladenosine(2503) in 23S rRNA + 5'-deoxyadenosine + L-methionine + 2 oxidized [2Fe-2S]-[ferredoxin] + S-adenosyl-L-homocysteine. The catalysed reaction is adenosine(37) in tRNA + 2 reduced [2Fe-2S]-[ferredoxin] + 2 S-adenosyl-L-methionine = 2-methyladenosine(37) in tRNA + 5'-deoxyadenosine + L-methionine + 2 oxidized [2Fe-2S]-[ferredoxin] + S-adenosyl-L-homocysteine. In terms of biological role, specifically methylates position 2 of adenine 2503 in 23S rRNA and position 2 of adenine 37 in tRNAs. This Spiroplasma citri protein is Probable dual-specificity RNA methyltransferase RlmN.